Here is a 191-residue protein sequence, read N- to C-terminus: MIHISDAAQAHFAKLLANQEEGTQIRVFVINPGTPNAECGVSYCPPDAVEASDTALKFDLLTAYVDELSAPYLEDAEIDFVTDQLGSQLTLKAPNAKMRKVADDAPLMERVEYMLQSQINPQLAGHGGRVSLMEITDEGYAILQFGGGCNGCSMVDVTLKEGIEKQLLNEFPELKGVRDLTEHQRGEHSYY.

[4Fe-4S] cluster-binding residues include Cys-149 and Cys-152.

Belongs to the NfuA family. As to quaternary structure, homodimer. The cofactor is [4Fe-4S] cluster.

Functionally, involved in iron-sulfur cluster biogenesis. Binds a 4Fe-4S cluster, can transfer this cluster to apoproteins, and thereby intervenes in the maturation of Fe/S proteins. Could also act as a scaffold/chaperone for damaged Fe/S proteins. The sequence is that of Fe/S biogenesis protein NfuA from Citrobacter koseri (strain ATCC BAA-895 / CDC 4225-83 / SGSC4696).